A 172-amino-acid polypeptide reads, in one-letter code: Zinc finger C2HC domain-containing protein 1B (172 aa).

2 consecutive C2HC/C3H-type zinc fingers follow at residues 14–43 (KLFPCEVCGRCFATDVLERHGPICKKVFNK) and 117–146 (DYIQCPYCMRRFNETAAQRHINFCKNQTSR). 8 residues coordinate Zn(2+): C18, C21, H33, C37, C121, C124, H136, and C140.

Belongs to the ZC2HC1 family. The cofactor is Zn(2+).

This chain is Zinc finger C2HC domain-containing protein 1B (Zc2hc1b), found in Mus musculus (Mouse).